The chain runs to 361 residues: MKAGINQIQSYVPEEPVQRVKSKYHLKRLARLSANENPYGTSPLVKEALINAINDGALNRYPDGDASELRALVGQQLNVAGDQLVFGVGLDEIIELVARAFLTPDDQVVVAKPAFSEYALHATVEGAAVKEVPVNPATGHFDFAGALAVINEATRLVWICNPNNPTGVLESPQAIEDFVRQVPKDTLVFIDEAYLDFADDPAKATCLPLVKRYQNVAVLRTLSKAYGLANVRVGFAVMPVALAAILQKIRLPYNLNTLAQVAAVAALRDQDFVKEAAAKNTVERAKWEDFFDQQGVKYFKSQANFIYFTVKNAADLAQTLLEKGFQVRRHLQPDWLRLTIGPAEDTTVMQALVADWLKQQA.

N6-(pyridoxal phosphate)lysine is present on Lys-224.

It belongs to the class-II pyridoxal-phosphate-dependent aminotransferase family. Histidinol-phosphate aminotransferase subfamily. Homodimer. Pyridoxal 5'-phosphate is required as a cofactor.

The enzyme catalyses L-histidinol phosphate + 2-oxoglutarate = 3-(imidazol-4-yl)-2-oxopropyl phosphate + L-glutamate. It participates in amino-acid biosynthesis; L-histidine biosynthesis; L-histidine from 5-phospho-alpha-D-ribose 1-diphosphate: step 7/9. The sequence is that of Histidinol-phosphate aminotransferase from Limosilactobacillus fermentum (strain NBRC 3956 / LMG 18251) (Lactobacillus fermentum).